A 289-amino-acid chain; its full sequence is Protein FraH (289 aa).

The DZANK-type zinc finger occupies 4 to 49 (CPNCNHPNPDGAVQCEACYTPLPATSNCPNCGATVQSDAAFCGQCG). Residues 18-48 (CEACYTPLPATSNCPNCGATVQSDAAFCGQC) fold into a zinc finger. Residues 204 to 260 (VHIGKPNDRIPPDVDVSGFANSEIVSRVHADIRLEGDAHYIEDVGSSNGTYINNLPL) enclose the FHA domain.

In terms of biological role, putative heterocyst to vegetative cell connection. The chain is Protein FraH (fraH) from Nostoc sp. (strain PCC 7120 / SAG 25.82 / UTEX 2576).